Here is a 568-residue protein sequence, read N- to C-terminus: Hexose transporter 1 (568 aa).

Residues 1-32 (MATEEMREKSLKREAESLWDIPPESYASKACS) lie on the Cytoplasmic side of the membrane. A helical membrane pass occupies residues 33-53 (CMGTAAQLVMVAVLGSFQFGF). Residues 54–86 (NLSALNTSKAFIILDFGWCKDENGGHYSDCDTG) lie on the Extracellular side of the membrane. A disulfide bridge links Cys72 with Cys83. A helical transmembrane segment spans residues 87 to 107 (LVYGSLINTAVFLGACVGCLL). Over 108 to 119 (GGRLTDFGRRAS) the chain is Cytoplasmic. A helical membrane pass occupies residues 120-140 (LIFTHCVCTLGCILSAAAEGF). The Extracellular portion of the chain corresponds to 141–142 (PT). The helical transmembrane segment at 143 to 163 (LLIARLVVGVAVGMFTVCVPM) threads the bilayer. The Cytoplasmic segment spans residues 164–182 (YLSEVTPDDRRGYFGTFHQ). Alpha-D-glucose is bound at residue Gln182. Gln182 provides a ligand contact to beta-D-glucose. A helical membrane pass occupies residues 183 to 203 (LFITLGIFFGTLLGLAFGNAP). The Extracellular portion of the chain corresponds to 204 to 220 (AGDEVYEVSTFQQAWWR). The chain crosses the membrane as a helical span at residues 221-241 (VMLGLPAVVSLLAIWLLWFVF). Residues 242 to 306 (PFETPQYMVE…KAIVHPTYRS (65 aa)) are Cytoplasmic-facing. The chain crosses the membrane as a helical span at residues 307-327 (VILLACLLSIMQQFTGINVLV). Residues Gln318, Gln319, and Asn324 each contribute to the alpha-D-glucose site. Gln318 is a beta-D-glucose binding site. Asn324 contributes to the beta-D-glucose binding site. Over 328–345 (ANSNNLYSSLKLPQDAVT) the chain is Extracellular. Residues 346-366 (GLTVGFTALNVFLTVITIPLV) traverse the membrane as a helical segment. Position 355 (Asn355) interacts with beta-D-glucose. At 367-374 (DRLGRRTL) the chain is on the cytoplasmic side. Residues 375-395 (LLFSEAVMFVAMGIAFVANLV) traverse the membrane as a helical segment. Over 396–406 (DQSNTAVQWVT) the chain is Extracellular. Residues 407 to 427 (VACVYVFIVGFAVGYGPVLWI) traverse the membrane as a helical segment. Trp426 contributes to the alpha-D-glucose binding site. The Cytoplasmic portion of the chain corresponds to 428 to 443 (YIHEIFPPEIKQGAAS). A helical transmembrane segment spans residues 444–464 (LASALNWVATVAIVLPSDFLL). Topologically, residues 465-469 (KQGFS) are extracellular. Residues 470 to 490 (VFVGICTVALAIIFVVTFIFV) traverse the membrane as a helical segment. The Cytoplasmic segment spans residues 491-568 (KETKGLSIEE…DDLTKGTEVV (78 aa)).

It belongs to the major facilitator superfamily. Sugar transporter (TC 2.A.1.1) family. As to quaternary structure, homodimer.

It localises to the cell membrane. The catalysed reaction is D-glucose(out) = D-glucose(in). It catalyses the reaction D-fructose(out) = D-fructose(in). The enzyme catalyses D-galactose(in) = D-galactose(out). It carries out the reaction D-mannose(out) = D-mannose(in). The catalysed reaction is D-glucosamine(out) = D-glucosamine(in). It catalyses the reaction D-xylose(out) = D-xylose(in). Its activity is regulated as follows. Inhibited by cytochalasin B. Its function is as follows. Sodium-independent facilitative hexose transporter. Can transport D-glucose and D-mannose with high affinity, and D-fructose and D-galactose with low affinity. Can transport D-xylose and D-glucosamine. This Toxoplasma gondii protein is Hexose transporter 1.